The primary structure comprises 332 residues: D-alanine--D-alanine ligase (332 aa).

Over residues 1–17 the composition is skewed to polar residues; the sequence is MPMTMTQSATNPTATPV. A disordered region spans residues 1 to 28; it reads MPMTMTQSATNPTATPVSANKASANAAT. Over residues 18-28 the composition is skewed to low complexity; that stretch reads SANKASANAAT. The ATP-grasp domain maps to 132–329; the sequence is KQLWHGCGLS…FEQLCWHILA (198 aa). 158–213 is an ATP binding site; that stretch reads VNTLGLPLIVKPVHEGSSIGMSKVNTLDELPKAYEVAAGCGDVVMAEKWITGREFT. Mg(2+)-binding residues include Asp283, Glu296, and Asn298.

This sequence belongs to the D-alanine--D-alanine ligase family. Mg(2+) serves as cofactor. It depends on Mn(2+) as a cofactor.

It localises to the cytoplasm. It catalyses the reaction 2 D-alanine + ATP = D-alanyl-D-alanine + ADP + phosphate + H(+). It functions in the pathway cell wall biogenesis; peptidoglycan biosynthesis. In terms of biological role, cell wall formation. The chain is D-alanine--D-alanine ligase from Psychrobacter sp. (strain PRwf-1).